The sequence spans 122 residues: Large ribosomal subunit protein uL14 (122 aa).

The protein belongs to the universal ribosomal protein uL14 family. In terms of assembly, part of the 50S ribosomal subunit. Forms a cluster with proteins L3 and L19. In the 70S ribosome, L14 and L19 interact and together make contacts with the 16S rRNA in bridges B5 and B8.

Functionally, binds to 23S rRNA. Forms part of two intersubunit bridges in the 70S ribosome. This Anaeromyxobacter dehalogenans (strain 2CP-1 / ATCC BAA-258) protein is Large ribosomal subunit protein uL14.